A 326-amino-acid chain; its full sequence is Flap endonuclease 1 (326 aa).

The interval 1–98 (MGVQFGDFIP…KTRKVRREMK (98 aa)) is N-domain. Residues D27, D80, E152, E154, D173, D175, and D224 each contribute to the Mg(2+) site. The I-domain stretch occupies residues 116-245 (EAAKYAKRVS…KRAYELVRSG (130 aa)). Residues 317-325 (KQKTLDAWF) form an interaction with PCNA region.

This sequence belongs to the XPG/RAD2 endonuclease family. FEN1 subfamily. As to quaternary structure, interacts with PCNA. PCNA stimulates the nuclease activity without altering cleavage specificity. Requires Mg(2+) as cofactor.

Structure-specific nuclease with 5'-flap endonuclease and 5'-3' exonuclease activities involved in DNA replication and repair. During DNA replication, cleaves the 5'-overhanging flap structure that is generated by displacement synthesis when DNA polymerase encounters the 5'-end of a downstream Okazaki fragment. Binds the unpaired 3'-DNA end and kinks the DNA to facilitate 5' cleavage specificity. Cleaves one nucleotide into the double-stranded DNA from the junction in flap DNA, leaving a nick for ligation. Also involved in the base excision repair (BER) pathway. Acts as a genome stabilization factor that prevents flaps from equilibrating into structures that lead to duplications and deletions. Also possesses 5'-3' exonuclease activity on nicked or gapped double-stranded DNA. This is Flap endonuclease 1 from Methanocaldococcus jannaschii (strain ATCC 43067 / DSM 2661 / JAL-1 / JCM 10045 / NBRC 100440) (Methanococcus jannaschii).